Here is a 125-residue protein sequence, read N- to C-terminus: Glycine cleavage system H protein (125 aa).

The Lipoyl-binding domain maps to Glu-19–Lys-101. Position 60 is an N6-lipoyllysine (Lys-60).

Belongs to the GcvH family. As to quaternary structure, the glycine cleavage system is composed of four proteins: P, T, L and H. Requires (R)-lipoate as cofactor.

The glycine cleavage system catalyzes the degradation of glycine. The H protein shuttles the methylamine group of glycine from the P protein to the T protein. The polypeptide is Glycine cleavage system H protein (Legionella pneumophila (strain Corby)).